The primary structure comprises 657 residues: Threonine--tRNA ligase (657 aa).

In terms of domain architecture, TGS spans 1-70 (MSDHKESTGA…NSDAAIEIIT (70 aa)). The segment at 253–555 (DHRKLGAELE…LIEHTAGNFP (303 aa)) is catalytic. The Zn(2+) site is built by cysteine 351, histidine 402, and histidine 532.

Belongs to the class-II aminoacyl-tRNA synthetase family. In terms of assembly, homodimer. The cofactor is Zn(2+).

The protein resides in the cytoplasm. The enzyme catalyses tRNA(Thr) + L-threonine + ATP = L-threonyl-tRNA(Thr) + AMP + diphosphate + H(+). Functionally, catalyzes the attachment of threonine to tRNA(Thr) in a two-step reaction: L-threonine is first activated by ATP to form Thr-AMP and then transferred to the acceptor end of tRNA(Thr). Also edits incorrectly charged L-seryl-tRNA(Thr). The chain is Threonine--tRNA ligase from Chlorobium chlorochromatii (strain CaD3).